The sequence spans 218 residues: Chromophore lyase CpcT/CpeT 1 (218 aa).

It belongs to the CpcT/CpeT biliprotein lyase family.

Its function is as follows. Covalently attaches a chromophore to Cys residue(s) of phycobiliproteins. This Synechococcus sp. (strain JA-3-3Ab) (Cyanobacteria bacterium Yellowstone A-Prime) protein is Chromophore lyase CpcT/CpeT 1.